The chain runs to 232 residues: DNA repair protein RecO (232 aa).

Belongs to the RecO family.

In terms of biological role, involved in DNA repair and RecF pathway recombination. This is DNA repair protein RecO from Francisella tularensis subsp. novicida (strain U112).